A 79-amino-acid chain; its full sequence is Putative defensin-like protein 146 (79 aa).

The first 25 residues, 1–25 (MMKNQFQLSLIILTFFILLELGVMG), serve as a signal peptide directing secretion. 4 disulfides stabilise this stretch: cysteine 35-cysteine 78, cysteine 46-cysteine 66, cysteine 51-cysteine 72, and cysteine 55-cysteine 74.

It belongs to the DEFL family.

The protein resides in the secreted. The sequence is that of Putative defensin-like protein 146 (LCR9) from Arabidopsis thaliana (Mouse-ear cress).